We begin with the raw amino-acid sequence, 616 residues long: Dihydroxy-acid dehydratase (616 aa).

Asp-81 is a binding site for Mg(2+). Cys-122 contacts [2Fe-2S] cluster. Mg(2+) is bound by residues Asp-123 and Lys-124. At Lys-124 the chain carries N6-carboxylysine. Cys-195 is a [2Fe-2S] cluster binding site. Glu-491 contributes to the Mg(2+) binding site. Ser-517 acts as the Proton acceptor in catalysis.

This sequence belongs to the IlvD/Edd family. Homodimer. The cofactor is [2Fe-2S] cluster. Mg(2+) serves as cofactor.

The enzyme catalyses (2R)-2,3-dihydroxy-3-methylbutanoate = 3-methyl-2-oxobutanoate + H2O. It carries out the reaction (2R,3R)-2,3-dihydroxy-3-methylpentanoate = (S)-3-methyl-2-oxopentanoate + H2O. The protein operates within amino-acid biosynthesis; L-isoleucine biosynthesis; L-isoleucine from 2-oxobutanoate: step 3/4. Its pathway is amino-acid biosynthesis; L-valine biosynthesis; L-valine from pyruvate: step 3/4. Functions in the biosynthesis of branched-chain amino acids. Catalyzes the dehydration of (2R,3R)-2,3-dihydroxy-3-methylpentanoate (2,3-dihydroxy-3-methylvalerate) into 2-oxo-3-methylpentanoate (2-oxo-3-methylvalerate) and of (2R)-2,3-dihydroxy-3-methylbutanoate (2,3-dihydroxyisovalerate) into 2-oxo-3-methylbutanoate (2-oxoisovalerate), the penultimate precursor to L-isoleucine and L-valine, respectively. This chain is Dihydroxy-acid dehydratase, found in Salmonella schwarzengrund (strain CVM19633).